A 391-amino-acid polypeptide reads, in one-letter code: tRNA (cytosine(38)-C(5))-methyltransferase (391 aa).

Positions 4–391 (LRALELYSGI…VAKLIKILCD (388 aa)) constitute an SAM-dependent MTase C5-type domain. S-adenosyl-L-methionine contacts are provided by residues 13–15 (IGG), D34, 57–58 (IE), and S76. C79 is an active-site residue. S376 is a binding site for S-adenosyl-L-methionine.

This sequence belongs to the class I-like SAM-binding methyltransferase superfamily. C5-methyltransferase family.

The protein resides in the cytoplasm. The enzyme catalyses cytidine(38) in tRNA + S-adenosyl-L-methionine = 5-methylcytidine(38) in tRNA + S-adenosyl-L-homocysteine + H(+). Functionally, specifically methylates cytosine 38 in the anticodon loop of tRNA(Asp). Has higher activity on tRNA(Asp) modified with queuosine at position 34. The protein is tRNA (cytosine(38)-C(5))-methyltransferase (TRDMT1) of Bos taurus (Bovine).